Here is a 492-residue protein sequence, read N- to C-terminus: Bifunctional purine biosynthesis protein PurH (492 aa).

In terms of domain architecture, MGS-like spans 1–144 (MKKAILSVSN…KNYKHVTTIV (144 aa)).

The protein belongs to the PurH family.

It carries out the reaction (6R)-10-formyltetrahydrofolate + 5-amino-1-(5-phospho-beta-D-ribosyl)imidazole-4-carboxamide = 5-formamido-1-(5-phospho-D-ribosyl)imidazole-4-carboxamide + (6S)-5,6,7,8-tetrahydrofolate. It catalyses the reaction IMP + H2O = 5-formamido-1-(5-phospho-D-ribosyl)imidazole-4-carboxamide. Its pathway is purine metabolism; IMP biosynthesis via de novo pathway; 5-formamido-1-(5-phospho-D-ribosyl)imidazole-4-carboxamide from 5-amino-1-(5-phospho-D-ribosyl)imidazole-4-carboxamide (10-formyl THF route): step 1/1. It participates in purine metabolism; IMP biosynthesis via de novo pathway; IMP from 5-formamido-1-(5-phospho-D-ribosyl)imidazole-4-carboxamide: step 1/1. This is Bifunctional purine biosynthesis protein PurH from Staphylococcus aureus (strain Newman).